Here is a 157-residue protein sequence, read N- to C-terminus: Heat shock protein beta-9 (157 aa).

Residues 1–17 (MQRVGSSLPSGSQSASQ) are compositionally biased toward low complexity. Disordered stretches follow at residues 1–20 (MQRVGSSLPSGSQSASQCPS) and 136–157 (PPSEAQTGPASRFRSRGSKKLA). A sHSP domain is found at 35–148 (QRLTEDAAAV…EAQTGPASRF (114 aa)). The span at 148 to 157 (FRSRGSKKLA) shows a compositional bias: basic residues.

The protein belongs to the small heat shock protein (HSP20) family.

It localises to the cytoplasm. The protein localises to the nucleus. The polypeptide is Heat shock protein beta-9 (HSPB9) (Bos taurus (Bovine)).